Consider the following 337-residue polypeptide: Peroxisome biogenesis factor 10 (337 aa).

The Peroxisomal matrix portion of the chain corresponds to 1-24 (MKNDNKLQKEALMRLSQLRFPFAD). Residues 25–54 (APSIVQAHQKDEQIQGLLIMKVTELCKLIK) form a helical membrane-spanning segment. Ser-55 is a topological domain (cytoplasmic). A helical transmembrane segment spans residues 56 to 77 (QLFVNSYPKELSIFAKLLYLLF). Residues 78–105 (TTGRRGRTLGEEYVDLTYTNRKGTRLAG) lie on the Peroxisomal matrix side of the membrane. Residues 106-138 (RLKMIVFAFAYPLCPYFITKLYKKIMKNNKESK) form a helical membrane-spanning segment. Residues 139–145 (IEDTESV) lie on the Cytoplasmic side of the membrane. Residues 146-166 (AAFCKGLLDFILDVHMTLFYF) traverse the membrane as a helical segment. At 167–202 (KGAFYSISKRIFGMRYVFKHILSKNEANFREEGSQK) the chain is on the peroxisomal matrix side. Residues 203–222 (YKVLGYILLAQNVMKWYPVL) traverse the membrane as a helical segment. Residues 223–337 (TSTLGSWIYG…QPQEILVLRQ (115 aa)) are Cytoplasmic-facing. 8 residues coordinate Zn(2+): Cys-286, Cys-289, Cys-301, His-303, Cys-306, Cys-309, Cys-320, and Cys-323. The RING-type zinc-finger motif lies at 286–327 (CILCLMNMSDPSCAPCGHLFCWSCLMSWCKERPECPLCRQHC).

It belongs to the pex2/pex10/pex12 family. Component of the PEX2-PEX10-PEX12 retrotranslocation channel, composed of PEX2, PEX10 and PEX12.

The protein resides in the peroxisome membrane. The enzyme catalyses S-ubiquitinyl-[E2 ubiquitin-conjugating enzyme]-L-cysteine + [acceptor protein]-L-lysine = [E2 ubiquitin-conjugating enzyme]-L-cysteine + N(6)-ubiquitinyl-[acceptor protein]-L-lysine.. It participates in protein modification; protein ubiquitination. The E3 ubiquitin-protein ligase activity is stimulated by PEX12. Functionally, E3 ubiquitin-protein ligase component of a retrotranslocation channel required for peroxisome organization by mediating export of the PEX5 receptor from peroxisomes to the cytosol, thereby promoting PEX5 recycling. The retrotranslocation channel is composed of PEX2, PEX10 and PEX12; each subunit contributing transmembrane segments that coassemble into an open channel that specifically allows the passage of PEX5 through the peroxisomal membrane. PEX10 also regulates PEX5 recycling by acting as a E3 ubiquitin-protein ligase. When PEX5 recycling is compromised, PEX10 catalyzes polyubiquitination of PEX5 during its passage through the retrotranslocation channel, leading to its degradation. In Saccharomyces cerevisiae (strain ATCC 204508 / S288c) (Baker's yeast), this protein is Peroxisome biogenesis factor 10.